The primary structure comprises 134 residues: Small ribosomal subunit protein uS9 (134 aa).

Residues 98–114 (SKQELKSHGFLTRDPRK) show a composition bias toward basic and acidic residues. Positions 98 to 134 (SKQELKSHGFLTRDPRKKERKKYGHKKARKSFQFSKR) are disordered. The segment covering 115–134 (KERKKYGHKKARKSFQFSKR) has biased composition (basic residues).

It belongs to the universal ribosomal protein uS9 family.

The polypeptide is Small ribosomal subunit protein uS9 (Chlamydia caviae (strain ATCC VR-813 / DSM 19441 / 03DC25 / GPIC) (Chlamydophila caviae)).